The sequence spans 236 residues: UPF0502 protein Bcenmc03_4618 (236 aa).

The protein belongs to the UPF0502 family.

The protein is UPF0502 protein Bcenmc03_4618 of Burkholderia orbicola (strain MC0-3).